The following is a 221-amino-acid chain: Small ribosomal subunit protein uS3 (221 aa).

A KH type-2 domain is found at 39–108; the sequence is IRKFVKKELF…NILINIVEVK (70 aa).

The protein belongs to the universal ribosomal protein uS3 family. Part of the 30S ribosomal subunit. Forms a tight complex with proteins S10 and S14.

In terms of biological role, binds the lower part of the 30S subunit head. Binds mRNA in the 70S ribosome, positioning it for translation. This Clostridium botulinum (strain Alaska E43 / Type E3) protein is Small ribosomal subunit protein uS3.